Consider the following 223-residue polypeptide: NAD(P)H-hydrate epimerase (223 aa).

A YjeF N-terminal domain is found at 9–209; it reads MQKIDTYTVN…DIGLLTPPDF (201 aa). A (6S)-NADPHX-binding site is contributed by 57-61; it reads NNGAD. K(+) is bound by residues Asn58 and Asp119. (6S)-NADPHX contacts are provided by residues 123–129 and Asp152; that span reads GTGLNNL. Position 155 (Thr155) interacts with K(+).

The protein belongs to the NnrE/AIBP family. The cofactor is K(+).

The enzyme catalyses (6R)-NADHX = (6S)-NADHX. It carries out the reaction (6R)-NADPHX = (6S)-NADPHX. Functionally, catalyzes the epimerization of the S- and R-forms of NAD(P)HX, a damaged form of NAD(P)H that is a result of enzymatic or heat-dependent hydration. This is a prerequisite for the S-specific NAD(P)H-hydrate dehydratase to allow the repair of both epimers of NAD(P)HX. The sequence is that of NAD(P)H-hydrate epimerase from Leuconostoc gelidum subsp. gasicomitatum (strain DSM 15947 / CCUG 46042 / CECT 5767 / JCM 12535 / LMG 18811 / NBRC 113245 / TB1-10) (Leuconostoc gasicomitatum).